The sequence spans 236 residues: Probable transcriptional regulatory protein UU295 (236 aa).

The protein belongs to the TACO1 family.

The protein resides in the cytoplasm. This is Probable transcriptional regulatory protein UU295 from Ureaplasma parvum serovar 3 (strain ATCC 700970).